A 585-amino-acid polypeptide reads, in one-letter code: Cytidine monophosphate-N-acetylneuraminic acid hydroxylase (585 aa).

Positions 9–107 constitute a Rieske domain; that stretch reads LSPVEVANLK…VEMDENNRLL (99 aa). The [2Fe-2S] cluster site is built by Cys49, His51, Cys70, and His73.

This sequence belongs to the CMP-Neu5Ac hydroxylase family. The cofactor is [2Fe-2S] cluster.

It localises to the cytoplasm. The enzyme catalyses CMP-N-acetyl-beta-neuraminate + 2 Fe(II)-[cytochrome b5] + O2 + 2 H(+) = CMP-N-glycoloyl-beta-neuraminate + 2 Fe(III)-[cytochrome b5] + H2O. It functions in the pathway amino-sugar metabolism; N-acetylneuraminate metabolism. Functionally, sialic acids are components of carbohydrate chains of glycoconjugates and are involved in cell-cell recognition and cell-pathogen interactions. Catalyzes the conversion of CMP-N-acetylneuraminic acid (CMP-Neu5Ac) into its hydroxylated derivative CMP-N-glycolylneuraminic acid (CMP-Neu5Gc), a sialic acid abundantly expressed at the surface of many cells. The chain is Cytidine monophosphate-N-acetylneuraminic acid hydroxylase (CMAH) from Pongo pygmaeus (Bornean orangutan).